The primary structure comprises 272 residues: Undecaprenyl-diphosphatase (272 aa).

Transmembrane regions (helical) follow at residues 6–26 (SLLI…LPVS), 45–65 (AKTF…VMFW), 92–112 (THIL…HDVI), 115–135 (LFYP…LLAA), 189–209 (YAAS…ATVL), 225–245 (MFAV…KTFL), and 251–271 (ISFV…YMVF).

It belongs to the UppP family.

Its subcellular location is the cell inner membrane. It catalyses the reaction di-trans,octa-cis-undecaprenyl diphosphate + H2O = di-trans,octa-cis-undecaprenyl phosphate + phosphate + H(+). Its function is as follows. Catalyzes the dephosphorylation of undecaprenyl diphosphate (UPP). Confers resistance to bacitracin. This chain is Undecaprenyl-diphosphatase, found in Pectobacterium carotovorum subsp. carotovorum (strain PC1).